The chain runs to 261 residues: Ribonuclease HII (261 aa).

In terms of domain architecture, RNase H type-2 spans 71–260; the sequence is HYIAGVDEVG…LHKYRHNTLL (190 aa). The a divalent metal cation site is built by aspartate 77, glutamate 78, and aspartate 169.

It belongs to the RNase HII family. It depends on Mn(2+) as a cofactor. Mg(2+) serves as cofactor.

The protein resides in the cytoplasm. It carries out the reaction Endonucleolytic cleavage to 5'-phosphomonoester.. In terms of biological role, endonuclease that specifically degrades the RNA of RNA-DNA hybrids. This is Ribonuclease HII from Oceanobacillus iheyensis (strain DSM 14371 / CIP 107618 / JCM 11309 / KCTC 3954 / HTE831).